A 132-amino-acid chain; its full sequence is Large ribosomal subunit protein uL14 (132 aa).

Belongs to the universal ribosomal protein uL14 family. In terms of assembly, part of the 50S ribosomal subunit. Forms a cluster with proteins L3 and L24e, part of which may contact the 16S rRNA in 2 intersubunit bridges.

Its function is as follows. Binds to 23S rRNA. Forms part of two intersubunit bridges in the 70S ribosome. The sequence is that of Large ribosomal subunit protein uL14 from Methanosarcina barkeri (strain Fusaro / DSM 804).